We begin with the raw amino-acid sequence, 313 residues long: Probable cell division protein WhiA (313 aa).

The H-T-H motif DNA-binding region spans 278–311 (SLKELGKLLDPPLSKSGVNHRLRRIKSIANEIRG).

Belongs to the WhiA family.

Involved in cell division and chromosome segregation. The chain is Probable cell division protein WhiA from Halothermothrix orenii (strain H 168 / OCM 544 / DSM 9562).